The primary structure comprises 249 residues: MPTKFQLEEMLRAGVHFGHLARRWNPKMKPYIFMEKNGVHIIDLKKTLVMAEEALKAIEAIASTGREIMLVGTKKQAKVIIAEQAERAGMPYVCERWLGGMLTNFSTIRQSIRRMNAIERMETDGTFDMITKKERLMLIREKDKLVRILGGIANMNRLPAALFVVDIKKEHIAVKEARSLGIPIFAMVDTNCDPDEVDYVIPANDDAIRSIDLMVKAVADTILEARTLQVEQEVLAEMDEAAEEETAND.

This sequence belongs to the universal ribosomal protein uS2 family.

The sequence is that of Small ribosomal subunit protein uS2 from Chlorobaculum tepidum (strain ATCC 49652 / DSM 12025 / NBRC 103806 / TLS) (Chlorobium tepidum).